Here is an 86-residue protein sequence, read N- to C-terminus: Mu-theraphotoxin-Cg2a 1 (86 aa).

A signal peptide spans 1-21 (MKVSVVITLAVLGIMFVWASA). The propeptide occupies 22–50 (AELEERGSDQRDSPAWLKSMERIFQSEER). Disulfide bonds link Cys-52–Cys-66, Cys-59–Cys-71, and Cys-65–Cys-78. The residue at position 84 (Phe-84) is a Phenylalanine amide.

It belongs to the neurotoxin 10 (Hwtx-1) family. 37 (Jztx-31) subfamily. In terms of tissue distribution, expressed by the venom gland.

The protein resides in the secreted. Its function is as follows. Inhibits both peak current and fast inactivation of voltage-gated sodium channels (Nav) channels. Inhibits the inactivation of Nav on DRG neurons (EC(50)=1.77 uM) and peak current of cardiac myocytes (IC(50)=0.90 uM). This chain is Mu-theraphotoxin-Cg2a 1, found in Chilobrachys guangxiensis (Chinese earth tiger tarantula).